A 349-amino-acid polypeptide reads, in one-letter code: MGVTELGKLIGREARREIKLENLAGRCIALDAYNALYQFLASIRQPDGTPLMDRQGRVTSHLSGLFYRTINLMEAGIKPVYVFDGKPPEFKLAEIEARRRVKEKAMEEVVKAIREGKRDDVAKYMKRVIFLTNEMVEDAKRLLTYMGVPWVQAPSEGEAQAAHMAKRGHCWAVGSQDYDSLLFGSPRLVRNLAVSPKRRSGEEVVEVSPEVVELDSVLKALKLKGREQLIDVAILLGTDYNPDGVPGVGPQKALKLVLEFGSLEKMLDTVLRGVSFPVDPLEIKRFFLNPPVTEEYALELKNVDERGLVNFLVGEHDFSEERVAKAVERLKKARARQKTSSLDSFFHGA.

The interval 1-102 (MGVTELGKLI…AEIEARRRVK (102 aa)) is N-domain. Positions 31, 84, 156, 158, 177, 179, and 239 each coordinate Mg(2+). The I-domain stretch occupies residues 120–261 (DVAKYMKRVI…KALKLVLEFG (142 aa)).

Belongs to the XPG/RAD2 endonuclease family. FEN1 subfamily. Interacts with PCNA. PCNA stimulates the nuclease activity without altering cleavage specificity. Requires Mg(2+) as cofactor.

Its function is as follows. Structure-specific nuclease with 5'-flap endonuclease and 5'-3' exonuclease activities involved in DNA replication and repair. During DNA replication, cleaves the 5'-overhanging flap structure that is generated by displacement synthesis when DNA polymerase encounters the 5'-end of a downstream Okazaki fragment. Binds the unpaired 3'-DNA end and kinks the DNA to facilitate 5' cleavage specificity. Cleaves one nucleotide into the double-stranded DNA from the junction in flap DNA, leaving a nick for ligation. Also involved in the base excision repair (BER) pathway. Acts as a genome stabilization factor that prevents flaps from equilibrating into structures that lead to duplications and deletions. Also possesses 5'-3' exonuclease activity on nicked or gapped double-stranded DNA. This Pyrobaculum neutrophilum (strain DSM 2338 / JCM 9278 / NBRC 100436 / V24Sta) (Thermoproteus neutrophilus) protein is Flap endonuclease 1.